The sequence spans 316 residues: Pantothenate kinase (316 aa).

95–102 contacts ATP; the sequence is GSVSVGKS.

The protein belongs to the prokaryotic pantothenate kinase family.

It is found in the cytoplasm. It catalyses the reaction (R)-pantothenate + ATP = (R)-4'-phosphopantothenate + ADP + H(+). It participates in cofactor biosynthesis; coenzyme A biosynthesis; CoA from (R)-pantothenate: step 1/5. The protein is Pantothenate kinase of Haemophilus ducreyi (strain 35000HP / ATCC 700724).